Here is a 246-residue protein sequence, read N- to C-terminus: Purine nucleoside phosphorylase ORF3 (246 aa).

Residues H71, C110, and H127 each contribute to the Zn(2+) site.

It belongs to the purine nucleoside phosphorylase YfiH/LACC1 family. Homodimer. Requires Cu(2+) as cofactor. The cofactor is Zn(2+).

The enzyme catalyses adenosine + phosphate = alpha-D-ribose 1-phosphate + adenine. The catalysed reaction is S-methyl-5'-thioadenosine + phosphate = 5-(methylsulfanyl)-alpha-D-ribose 1-phosphate + adenine. It carries out the reaction inosine + phosphate = alpha-D-ribose 1-phosphate + hypoxanthine. It catalyses the reaction adenosine + H2O + H(+) = inosine + NH4(+). Purine nucleoside enzyme that catalyzes the phosphorolysis of adenosine and inosine nucleosides, yielding D-ribose 1-phosphate and the respective free bases, adenine and hypoxanthine. Also catalyzes the phosphorolysis of S-methyl-5'-thioadenosine into adenine and S-methyl-5-thio-alpha-D-ribose 1-phosphate. Also has adenosine deaminase activity. The polypeptide is Purine nucleoside phosphorylase ORF3 (Streptomyces griseus).